The following is a 348-amino-acid chain: Putative methylthioribose-1-phosphate isomerase (348 aa).

Substrate contacts are provided by residues 55–57, arginine 98, and glutamine 203; that span reads RGA. The active-site Proton donor is the aspartate 244. 253–254 is a substrate binding site; the sequence is NK.

The protein belongs to the eIF-2B alpha/beta/delta subunits family. MtnA subfamily.

The catalysed reaction is 5-(methylsulfanyl)-alpha-D-ribose 1-phosphate = 5-(methylsulfanyl)-D-ribulose 1-phosphate. In terms of biological role, catalyzes the interconversion of methylthioribose-1-phosphate (MTR-1-P) into methylthioribulose-1-phosphate (MTRu-1-P). The sequence is that of Putative methylthioribose-1-phosphate isomerase from Methanosarcina acetivorans (strain ATCC 35395 / DSM 2834 / JCM 12185 / C2A).